We begin with the raw amino-acid sequence, 489 residues long: Betaine aldehyde dehydrogenase (489 aa).

K(+) is bound by residues threonine 26 and aspartate 93. 150-152 (GAW) lines the NAD(+) pocket. Lysine 162 acts as the Charge relay system in catalysis. Position 176–179 (176–179 (KPSE)) interacts with NAD(+). Valine 180 contacts K(+). 229–232 (GVET) serves as a coordination point for NAD(+). Leucine 245 is a K(+) binding site. Glutamate 251 serves as the catalytic Proton acceptor. NAD(+) is bound by residues glycine 253, cysteine 285, and glutamate 386. Cysteine 285 serves as the catalytic Nucleophile. Cysteine sulfenic acid (-SOH) is present on cysteine 285. Positions 456 and 459 each coordinate K(+). The Charge relay system role is filled by glutamate 463.

The protein belongs to the aldehyde dehydrogenase family. As to quaternary structure, dimer of dimers. It depends on K(+) as a cofactor.

The catalysed reaction is betaine aldehyde + NAD(+) + H2O = glycine betaine + NADH + 2 H(+). Its pathway is amine and polyamine biosynthesis; betaine biosynthesis via choline pathway; betaine from betaine aldehyde: step 1/1. Functionally, involved in the biosynthesis of the osmoprotectant glycine betaine. Catalyzes the irreversible oxidation of betaine aldehyde to the corresponding acid. The sequence is that of Betaine aldehyde dehydrogenase from Burkholderia multivorans (strain ATCC 17616 / 249).